The sequence spans 180 residues: Oligoribonuclease (180 aa).

One can recognise an Exonuclease domain in the interval 7-168 (LVWIDLEMTG…QDIRDSIDEL (162 aa)). Residue Y128 is part of the active site.

The protein belongs to the oligoribonuclease family.

It is found in the cytoplasm. In terms of biological role, 3'-to-5' exoribonuclease specific for small oligoribonucleotides. The polypeptide is Oligoribonuclease (Dichelobacter nodosus (strain VCS1703A)).